Reading from the N-terminus, the 424-residue chain is Light-independent protochlorophyllide reductase subunit N (424 aa).

[4Fe-4S] cluster-binding residues include Cys27, Cys52, and Cys113.

The protein belongs to the BchN/ChlN family. Protochlorophyllide reductase is composed of three subunits; BchL, BchN and BchB. Forms a heterotetramer of two BchB and two BchN subunits. The cofactor is [4Fe-4S] cluster.

The enzyme catalyses chlorophyllide a + oxidized 2[4Fe-4S]-[ferredoxin] + 2 ADP + 2 phosphate = protochlorophyllide a + reduced 2[4Fe-4S]-[ferredoxin] + 2 ATP + 2 H2O. It participates in porphyrin-containing compound metabolism; bacteriochlorophyll biosynthesis (light-independent). Component of the dark-operative protochlorophyllide reductase (DPOR) that uses Mg-ATP and reduced ferredoxin to reduce ring D of protochlorophyllide (Pchlide) to form chlorophyllide a (Chlide). This reaction is light-independent. The NB-protein (BchN-BchB) is the catalytic component of the complex. The protein is Light-independent protochlorophyllide reductase subunit N of Halorhodospira halophila (strain DSM 244 / SL1) (Ectothiorhodospira halophila (strain DSM 244 / SL1)).